A 280-amino-acid polypeptide reads, in one-letter code: Homeobox protein SMOX-1 (280 aa).

The disordered stretch occupies residues 61 to 88 (PNNNSFQLNTTNDSNNNNTTNNGNDSRS). Residues 69–85 (NTTNDSNNNNTTNNGND) are compositionally biased toward low complexity. The Antp-type hexapeptide signature appears at 214 to 219 (VYPWMN). The segment at residues 229–280 (QKRTRQTYTRYQTLELEKEFHFNKYLTRRRRIEIAHTLTLTERQIKIWFQNR) is a DNA-binding region (homeobox).

Belongs to the Antp homeobox family.

The protein resides in the nucleus. In Schistosoma mansoni (Blood fluke), this protein is Homeobox protein SMOX-1 (SMOX-1).